Reading from the N-terminus, the 444-residue chain is Homogentisate 1,2-dioxygenase (444 aa).

Histidine 298 serves as the catalytic Proton acceptor. Fe cation contacts are provided by histidine 341 and glutamate 347. Homogentisate-binding residues include tyrosine 356 and histidine 377. Histidine 377 is a binding site for Fe cation.

The protein belongs to the homogentisate dioxygenase family. In terms of assembly, hexamer; dimer of trimers. Requires Fe cation as cofactor.

It carries out the reaction homogentisate + O2 = 4-maleylacetoacetate + H(+). Its pathway is amino-acid degradation; L-phenylalanine degradation; acetoacetate and fumarate from L-phenylalanine: step 4/6. In terms of biological role, involved in the catabolism of homogentisate (2,5-dihydroxyphenylacetate or 2,5-OH-PhAc), a central intermediate in the degradation of phenylalanine and tyrosine. Catalyzes the oxidative ring cleavage of the aromatic ring of homogentisate to yield maleylacetoacetate. In Burkholderia lata (strain ATCC 17760 / DSM 23089 / LMG 22485 / NCIMB 9086 / R18194 / 383), this protein is Homogentisate 1,2-dioxygenase.